We begin with the raw amino-acid sequence, 71 residues long: Small ribosomal subunit protein bS21 (71 aa).

Basic residues predominate over residues 48 to 59; it reads KAAAAVKRHAKK. The tract at residues 48-71 is disordered; the sequence is KAAAAVKRHAKKVQRENRKFQRLY. Basic and acidic residues predominate over residues 60–71; it reads VQRENRKFQRLY.

It belongs to the bacterial ribosomal protein bS21 family.

In Saccharophagus degradans (strain 2-40 / ATCC 43961 / DSM 17024), this protein is Small ribosomal subunit protein bS21.